The primary structure comprises 424 residues: Enolase (424 aa).

Gln162 is a binding site for (2R)-2-phosphoglycerate. Glu204 (proton donor) is an active-site residue. Residues Asp241, Glu284, and Asp311 each coordinate Mg(2+). The (2R)-2-phosphoglycerate site is built by Lys336, Arg365, Ser366, and Lys387. Lys336 (proton acceptor) is an active-site residue.

It belongs to the enolase family. Mg(2+) is required as a cofactor.

The protein localises to the cytoplasm. It is found in the secreted. The protein resides in the cell surface. The catalysed reaction is (2R)-2-phosphoglycerate = phosphoenolpyruvate + H2O. It functions in the pathway carbohydrate degradation; glycolysis; pyruvate from D-glyceraldehyde 3-phosphate: step 4/5. In terms of biological role, catalyzes the reversible conversion of 2-phosphoglycerate (2-PG) into phosphoenolpyruvate (PEP). It is essential for the degradation of carbohydrates via glycolysis. This is Enolase from Agrobacterium fabrum (strain C58 / ATCC 33970) (Agrobacterium tumefaciens (strain C58)).